An 860-amino-acid chain; its full sequence is DNA mismatch repair protein MutS (860 aa).

Position 607 to 614 (607 to 614 (GPNMSGKS)) interacts with ATP.

The protein belongs to the DNA mismatch repair MutS family.

In terms of biological role, this protein is involved in the repair of mismatches in DNA. It is possible that it carries out the mismatch recognition step. This protein has a weak ATPase activity. The sequence is that of DNA mismatch repair protein MutS from Listeria innocua serovar 6a (strain ATCC BAA-680 / CLIP 11262).